Here is a 105-residue protein sequence, read N- to C-terminus: Secreted RxLR effector protein 158 (105 aa).

Positions 1–22 (MRGAHYVAIVLLVAAGGQTAAG) are cleaved as a signal peptide. The short motif at 50-71 (RALQASRNPKDDLMFSAGDEER) is the RxLR-dEER element.

Belongs to the RxLR effector family.

The protein localises to the secreted. Its subcellular location is the host nucleus. It is found in the host cytoplasm. Secreted effector that partially suppresses the host cell death induced by cell death-inducing proteins. The chain is Secreted RxLR effector protein 158 from Plasmopara viticola (Downy mildew of grapevine).